The primary structure comprises 274 residues: Large ribosomal subunit protein uL2cz/uL2cy (274 aa).

The disordered stretch occupies residues 225-274 (PVDHPHGGGEGRAPIGRKKPVTPWGYPALGRRSRKRKKYSDNLILRRRTK).

Belongs to the universal ribosomal protein uL2 family. Part of the 50S ribosomal subunit.

It localises to the plastid. The protein resides in the chloroplast. This is Large ribosomal subunit protein uL2cz/uL2cy (rpl2-A) from Lotus japonicus (Lotus corniculatus var. japonicus).